A 356-amino-acid chain; its full sequence is Cell division control protein 10 (356 aa).

A Septin-type G domain is found at 36–286; it reads KGFELNVLVV…NNYRKKIFEI (251 aa). A G1 motif region spans residues 46–53; sequence GRRGLGTS. GTP is bound by residues 46-53 and threonine 70; that span reads GRRGLGTS. A G3 motif region spans residues 93-96; sequence TYHE. The tract at residues 163–166 is G4 motif; sequence PKAD. GTP-binding positions include 164–172 and arginine 235; that span reads KADMYTPDE.

The protein belongs to the TRAFAC class TrmE-Era-EngA-EngB-Septin-like GTPase superfamily. Septin GTPase family. As to quaternary structure, component of the septin complex.

In terms of biological role, septins are GTPases involved in cytokinesis. The septins localize to the site of cleavage and act as a structural scaffold that recruits different components involved in diverse processes at specific stages during the cell cycle. Septins are also involved in cell morphogenesis, chitin deposition, cell cycle regulation, cell compartmentalization and spore wall formation. The sequence is that of Cell division control protein 10 (CDC10) from Encephalitozoon cuniculi (strain GB-M1) (Microsporidian parasite).